Reading from the N-terminus, the 205-residue chain is Large ribosomal subunit protein uL4 (205 aa).

Residues 43 to 96 (GKRQGTSKVKNRSAVRGGGKKPWRQKGTGRARQGSIRSPQWRGGGTVFGPTPRS) form a disordered region. Residues 51–71 (VKNRSAVRGGGKKPWRQKGTG) show a composition bias toward basic residues.

It belongs to the universal ribosomal protein uL4 family. In terms of assembly, part of the 50S ribosomal subunit.

One of the primary rRNA binding proteins, this protein initially binds near the 5'-end of the 23S rRNA. It is important during the early stages of 50S assembly. It makes multiple contacts with different domains of the 23S rRNA in the assembled 50S subunit and ribosome. Its function is as follows. Forms part of the polypeptide exit tunnel. In Lactobacillus helveticus (strain DPC 4571), this protein is Large ribosomal subunit protein uL4.